The chain runs to 432 residues: Selenocysteine lyase (432 aa).

N-acetylmethionine is present on methionine 1. Residues 1–20 (MDVARNGARGSVESPPNRKV) are disordered. Position 117 is a phosphoserine (serine 117). The residue at position 247 (lysine 247) is an N6-(pyridoxal phosphate)lysine. Catalysis depends on cysteine 375, which acts as the S-selanylcysteine intermediate.

This sequence belongs to the class-V pyridoxal-phosphate-dependent aminotransferase family. As to quaternary structure, homodimer. Pyridoxal 5'-phosphate serves as cofactor.

It localises to the cytoplasm. Its subcellular location is the cytosol. It carries out the reaction L-selenocysteine + AH2 = hydrogenselenide + L-alanine + A + H(+). Functionally, catalyzes the decomposition of L-selenocysteine to L-alanine and elemental selenium. The chain is Selenocysteine lyase (Scly) from Rattus norvegicus (Rat).